The chain runs to 310 residues: MRRVNILCSFALLFASHTSLAVTYPLPPEGSRLVGQSFTVTVPDHNTQPLETFAAQYGQGLSNMLEANPGADVFLPKSGSQLTIPQQLILPDTVRKGIVVNVAEMRLYYYPPDSNTVEVFPIGIGQAGRETPRNWVTTVERKQEAPTWTPTPNTRREYAKRGESLPAFVPAGPDNPMGLYAIYIGRLYAIHGTNANFGIGLRVSQGCIRLRNDDIKYLFDNVPVGTRVQIIDQPVKYTTEPDGSNWLEVHEPLSRNRAEYESDRKVPLPVTPSLRAFINGQEVDVNRANAALQRRSGMPVQISSGSRQMF.

The N-terminal stretch at 1-21 is a signal peptide; sequence MRRVNILCSFALLFASHTSLA. In terms of domain architecture, L,D-TPase catalytic spans 96–231; that stretch reads KGIVVNVAEM…VPVGTRVQII (136 aa). Histidine 191 acts as the Proton donor/acceptor in catalysis. The Nucleophile role is filled by cysteine 207.

It belongs to the YkuD family. In terms of assembly, interacts with DsbG.

Its subcellular location is the periplasm. It functions in the pathway cell wall biogenesis; peptidoglycan biosynthesis. Its function is as follows. Responsible, at least in part, for anchoring of the major outer membrane lipoprotein (Lpp, also known as the Braun lipoprotein) to the peptidoglycan via a meso-diaminopimelyl-L-Lys- bond on the terminal residue of Lpp. The polypeptide is Probable L,D-transpeptidase ErfK/SrfK (erfK) (Escherichia coli (strain K12)).